A 150-amino-acid polypeptide reads, in one-letter code: MNVILLDKIANLGSLGDQVSVKSGYARNFLFPQGKAVPATKSNVDLFEQRRAEYEAKLADQLAAAQARAEKVNALDAVTIASKAGDEGKLFGSIGTRDIADAVTAAGVEVKKSEVLMPHGTLREVGEFDIELHLHADVFANITLKVVPAE.

This sequence belongs to the bacterial ribosomal protein bL9 family.

In terms of biological role, binds to the 23S rRNA. In Idiomarina loihiensis (strain ATCC BAA-735 / DSM 15497 / L2-TR), this protein is Large ribosomal subunit protein bL9.